Consider the following 373-residue polypeptide: Cytoplasmic tRNA 2-thiolation protein 1 (373 aa).

This sequence belongs to the TtcA family. CTU1/NCS6/ATPBD3 subfamily.

The protein localises to the cytoplasm. The protein operates within tRNA modification; 5-methoxycarbonylmethyl-2-thiouridine-tRNA biosynthesis. Its function is as follows. Plays a central role in 2-thiolation of mcm(5)S(2)U at tRNA wobble positions of tRNA(Lys), tRNA(Glu) and tRNA(Gln). Directly binds tRNAs and probably acts by catalyzing adenylation of tRNAs, an intermediate required for 2-thiolation. It is unclear whether it acts as a sulfurtransferase that transfers sulfur from thiocarboxylated URM1 onto the uridine of tRNAs at wobble position. The sequence is that of Cytoplasmic tRNA 2-thiolation protein 1 from Caenorhabditis elegans.